The sequence spans 491 residues: Keratin, type II microfibrillar, component 7C (491 aa).

The residue at position 1 (Cys1) is a Blocked amino end (Cys). Residues 1-109 form a head region; that stretch reads CGFSTVGSGF…PNAQCVKQEE (109 aa). One can recognise an IF rod domain in the interval 109–420; the sequence is EKEQIKCLNN…RLLEGEEQRL (312 aa). Residues 110–144 form a coil 1A region; sequence KEQIKCLNNRFAAFIDKVRFLEQQNKLLETKLQFF. The interval 145 to 154 is linker 1; the sequence is QNRQCCESNL. Residues 155–255 are coil 1B; that stretch reads EPLFEGYIET…YQEEIRVLQA (101 aa). A linker 12 region spans residues 256–272; that stretch reads NISDTSVIVKMDNSRDL. Residues 273-416 form a coil 2 region; sequence NMDCIVAEIK…ATYRRLLEGE (144 aa). The tract at residues 417-491 is tail; the sequence is EQRLCEGVGA…GGGSCSLGRC (75 aa).

It belongs to the intermediate filament family.

Functionally, wool microfibrillar keratin. The chain is Keratin, type II microfibrillar, component 7C from Ovis aries (Sheep).